The following is a 128-amino-acid chain: MGKTLMALITAALLSTSSLVMAASVADDMETIAEHYGKVLKADSTAVIKQDLQAMRVAAVDAQKGIPTKLKSKVEDSPEMKDFRHGMDVLIGEIDGALALADQGKLDEAKQAAQDFKDTRNTYHKKYR.

A signal peptide spans 1-22 (MGKTLMALITAALLSTSSLVMA). The heme b site is built by Met29 and His124.

The protein belongs to the cytochrome b562 family. Requires heme b as cofactor.

The protein resides in the periplasm. In terms of biological role, electron-transport protein of unknown function. This Yersinia pestis protein is Probable soluble cytochrome b562 2 (cybC2).